The primary structure comprises 159 residues: Phosphopantetheine adenylyltransferase (159 aa).

Substrate is bound at residue Thr-10. ATP is bound by residues 10 to 11 (TF) and His-18. Substrate-binding residues include Lys-42, Met-74, and Arg-88. ATP contacts are provided by residues 89–91 (GLR), Glu-99, and 124–130 (WSFISSS).

Belongs to the bacterial CoaD family. In terms of assembly, homohexamer. The cofactor is Mg(2+).

It is found in the cytoplasm. It carries out the reaction (R)-4'-phosphopantetheine + ATP + H(+) = 3'-dephospho-CoA + diphosphate. The protein operates within cofactor biosynthesis; coenzyme A biosynthesis; CoA from (R)-pantothenate: step 4/5. Its function is as follows. Reversibly transfers an adenylyl group from ATP to 4'-phosphopantetheine, yielding dephospho-CoA (dPCoA) and pyrophosphate. In Yersinia enterocolitica serotype O:8 / biotype 1B (strain NCTC 13174 / 8081), this protein is Phosphopantetheine adenylyltransferase.